The sequence spans 305 residues: Dihydroorotate dehydrogenase B (NAD(+)), catalytic subunit (305 aa).

FMN is bound by residues S23 and 47–48; that span reads KG. Residues K47 and 71 to 75 each bind substrate; that span reads NAIGL. FMN is bound by residues N101 and N129. N129 contacts substrate. Residue C132 is the Nucleophile of the active site. FMN is bound by residues K167 and I193. 194-195 contacts substrate; sequence NT. Residues G219, 245-246, and 267-268 each bind FMN; these read GG and GT.

It belongs to the dihydroorotate dehydrogenase family. Type 1 subfamily. In terms of assembly, heterotetramer of 2 PyrK and 2 PyrD type B subunits. It depends on FMN as a cofactor.

It localises to the cytoplasm. The catalysed reaction is (S)-dihydroorotate + NAD(+) = orotate + NADH + H(+). The protein operates within pyrimidine metabolism; UMP biosynthesis via de novo pathway; orotate from (S)-dihydroorotate (NAD(+) route): step 1/1. Catalyzes the conversion of dihydroorotate to orotate with NAD(+) as electron acceptor. The polypeptide is Dihydroorotate dehydrogenase B (NAD(+)), catalytic subunit (pyrD) (Geobacter sp. (strain M21)).